The sequence spans 217 residues: Uracil-DNA glycosylase (217 aa).

Residue Asp62 is the Proton acceptor of the active site.

It belongs to the uracil-DNA glycosylase (UDG) superfamily. UNG family.

It is found in the cytoplasm. The enzyme catalyses Hydrolyzes single-stranded DNA or mismatched double-stranded DNA and polynucleotides, releasing free uracil.. Functionally, excises uracil residues from the DNA which can arise as a result of misincorporation of dUMP residues by DNA polymerase or due to deamination of cytosine. The chain is Uracil-DNA glycosylase from Streptococcus thermophilus (strain ATCC BAA-491 / LMD-9).